The chain runs to 199 residues: V-set and transmembrane domain-containing protein 5 (199 aa).

A signal peptide spans 1–27 (MRPPRCVGRTQGIPLGLLAFWVATARC). The Extracellular portion of the chain corresponds to 28-146 (LQSQGVSLYI…VSEIRYEDLH (119 aa)). One can recognise an Ig-like C2-type domain in the interval 36–138 (YIPRSAINAT…QSGTILLHVS (103 aa)). Residues Asn-43, Asn-87, and Asn-101 are each glycosylated (N-linked (GlcNAc...) asparagine). Residues 147 to 167 (FVAVFFALLAAVAVVLISLMW) form a helical membrane-spanning segment. The Cytoplasmic segment spans residues 168-199 (VCNQCAYKFQRKRRYKLRESTTEEIEMKDVEC). Positions 169-185 (CNQCAYKFQRKRRYKLR) are important for CDC42-dependent filopodia induction.

As to quaternary structure, can homooligomerize through cis interactions within the same cell membrane. N-glycosylated.

The protein resides in the cell membrane. It is found in the cell projection. The protein localises to the dendrite. It localises to the axon. Cell adhesion-like membrane protein of the central nervous system (CNS) which modulates both the position and complexity of central neurons by altering their membrane morphology and dynamics. Involved in the formation of neuronal dendrites and protrusions including dendritic filopodia. In synaptogenesis, regulates synapse formation by altering dendritic spine morphology and actin distribution. Promotes formation of unstable neuronal spines such as thin and branched types. Regulates neuronal morphogenesis and migration during cortical development in the brain. In Rattus norvegicus (Rat), this protein is V-set and transmembrane domain-containing protein 5 (Vstm5).